A 989-amino-acid chain; its full sequence is ATP-dependent 6-phosphofructokinase subunit alpha (989 aa).

An N-terminal catalytic PFK domain 1 region spans residues 1 to 585 (MPEPSISALS…SYESFLSVSK (585 aa)). ATP-binding positions include G220, 283-284 (RS), and 313-316 (GDGS). D314 provides a ligand contact to Mg(2+). Beta-D-fructose 6-phosphate-binding positions include 359-361 (SID), R396, 403-405 (MGR), E460, R487, and 493-496 (HVQR). The active-site Proton acceptor is D361. An interdomain linker region spans residues 586 to 599 (YDDGSYLVPESSRL). The segment at 600–989 (NIAIIHVGAP…LSGRLSIRTT (390 aa)) is C-terminal regulatory PFK domain 2. Beta-D-fructose 2,6-bisphosphate contacts are provided by residues R670, 727-731 (TVSNN), R765, 772-774 (QGG), E832, R858, 864-867 (HVQQ), and R963.

Belongs to the phosphofructokinase type A (PFKA) family. ATP-dependent PFK group I subfamily. Eukaryotic two domain clade 'E' sub-subfamily. As to quaternary structure, heterododecamer of 4 alpha, 4 beta and 4 gamma chains. The gamma chain bridges the N-terminal halves of the alpha and beta subunits. It depends on Mg(2+) as a cofactor.

The protein localises to the cytoplasm. The catalysed reaction is beta-D-fructose 6-phosphate + ATP = beta-D-fructose 1,6-bisphosphate + ADP + H(+). Its pathway is carbohydrate degradation; glycolysis; D-glyceraldehyde 3-phosphate and glycerone phosphate from D-glucose: step 3/4. Its activity is regulated as follows. Allosterically activated by ADP, AMP, or fructose 2,6-bisphosphate, and allosterically inhibited by ATP or citrate. Functionally, catalyzes the phosphorylation of D-fructose 6-phosphate to fructose 1,6-bisphosphate by ATP, the first committing step of glycolysis. Involved in the modulation of glucose-induced microautophagy of peroxisomes independent of its ability to metabolize glucose intermediates. The sequence is that of ATP-dependent 6-phosphofructokinase subunit alpha (PFK1) from Komagataella phaffii (strain GS115 / ATCC 20864) (Yeast).